Reading from the N-terminus, the 427-residue chain is Anhydro-N-acetylmuramic acid kinase (427 aa).

ATP is bound at residue 32–39 (GTSLDGMD).

Belongs to the anhydro-N-acetylmuramic acid kinase family.

It carries out the reaction 1,6-anhydro-N-acetyl-beta-muramate + ATP + H2O = N-acetyl-D-muramate 6-phosphate + ADP + H(+). The protein operates within amino-sugar metabolism; 1,6-anhydro-N-acetylmuramate degradation. It participates in cell wall biogenesis; peptidoglycan recycling. In terms of biological role, catalyzes the specific phosphorylation of 1,6-anhydro-N-acetylmuramic acid (anhMurNAc) with the simultaneous cleavage of the 1,6-anhydro ring, generating MurNAc-6-P. Is required for the utilization of anhMurNAc either imported from the medium or derived from its own cell wall murein, and thus plays a role in cell wall recycling. The protein is Anhydro-N-acetylmuramic acid kinase of Psychrobacter cryohalolentis (strain ATCC BAA-1226 / DSM 17306 / VKM B-2378 / K5).